The following is a 501-amino-acid chain: Lysine--tRNA ligase (501 aa).

Mg(2+)-binding residues include glutamate 410 and glutamate 417.

Belongs to the class-II aminoacyl-tRNA synthetase family. In terms of assembly, homodimer. Mg(2+) is required as a cofactor.

It localises to the cytoplasm. The enzyme catalyses tRNA(Lys) + L-lysine + ATP = L-lysyl-tRNA(Lys) + AMP + diphosphate. In Shewanella pealeana (strain ATCC 700345 / ANG-SQ1), this protein is Lysine--tRNA ligase.